The chain runs to 1327 residues: Vascular endothelial growth factor receptor 1 (1327 aa).

The signal sequence occupies residues 1 to 24; that stretch reads MPRQLLSGTVLLGAAFLLAGSTSG. The Extracellular portion of the chain corresponds to 25–749; the sequence is SKLKVPVLSV…GTVERSNLEL (725 aa). Ig-like C2-type domains are found at residues 30 to 121, 120 to 222, 227 to 323, 331 to 417, 424 to 545, 552 to 644, and 651 to 737; these read PVLS…SIVY, VYVF…HRET, DIKL…TTVI, NLKR…LTVT, PQIY…RNVS, PSGF…KDVS, and PALL…AYVT. 5 N-linked (GlcNAc...) asparagine glycosylation sites follow: Asn-48, Asn-73, Asn-82, Asn-98, and Asn-125. Cys-51 and Cys-105 are disulfide-bonded. A disulfide bridge connects residues Cys-154 and Cys-203. Asn-247 is a glycosylation site (N-linked (GlcNAc...) asparagine). A disulfide bond links Cys-248 and Cys-307. Asn-319, Asn-383, Asn-398, Asn-409, Asn-413, Asn-470, Asn-512, Asn-543, Asn-593, Asn-615, and Asn-663 each carry an N-linked (GlcNAc...) asparagine glycan. An intrachain disulfide couples Cys-450 to Cys-531. Cys-573 and Cys-626 are oxidised to a cystine. Cysteines 672 and 721 form a disulfide. A helical transmembrane segment spans residues 750–770; sequence ITLTCTCVAATLFWLLLTLFI. The Cytoplasmic segment spans residues 771-1327; the sequence is RKLKRPYFSE…SVVHYSQPSI (557 aa). In terms of domain architecture, Protein kinase spans 819–1151; that stretch reads LKLGKSLGHG…ELVKRLGDLL (333 aa). ATP contacts are provided by residues 825 to 833 and Lys-853; that span reads LGHGAFGKV. Positions 950–971 are disordered; the sequence is ASVTSSESFASSGFQEDKSLSD. Residues 951-961 show a composition bias toward low complexity; the sequence is SVTSSESFASS. The active-site Proton acceptor is the Asp-1015. A phosphotyrosine; by autocatalysis mark is found at Tyr-1046, Tyr-1162, Tyr-1202, Tyr-1231, Tyr-1316, and Tyr-1322.

The protein belongs to the protein kinase superfamily. Tyr protein kinase family. CSF-1/PDGF receptor subfamily. In terms of assembly, interacts with VEGFA, VEGFB and PGF. Monomer in the absence of bound VEGFA, VEGFB or PGF. Homodimer in the presence of bound VEGFA, VEGFB and PGF. Post-translationally, autophosphorylated on tyrosine residues upon ligand binding.

The protein resides in the cell membrane. It is found in the endosome. It localises to the secreted. It carries out the reaction L-tyrosyl-[protein] + ATP = O-phospho-L-tyrosyl-[protein] + ADP + H(+). Present in an inactive conformation in the absence of bound ligand. Binding of VEGFA, VEGFB or PGF leads to dimerization and activation by autophosphorylation on tyrosine residues. Tyrosine-protein kinase that acts as a cell-surface receptor for VEGFA, VEGFB and PGF, and plays an essential role in the regulation of angiogenesis, cell survival, cell migration, macrophage function, and chemotaxis. Acts as a positive regulator of postnatal retinal hyaloid vessel regression. Has very high affinity for VEGFA and relatively low protein kinase activity; may function as a negative regulator of VEGFA signaling by limiting the amount of free VEGFA and preventing its binding to KDR. Ligand binding leads to the activation of several signaling cascades. Activation of PLCG1 leads to the production of the cellular signaling molecules diacylglycerol and inositol 1,4,5-trisphosphate and the activation of protein kinase C. Mediates phosphorylation of PIK3R1, the regulatory subunit of phosphatidylinositol 3-kinase, leading to activation of phosphatidylinositol kinase and the downstream signaling pathway. Mediates activation of MAPK1/ERK2, MAPK3/ERK1 and the MAP kinase signaling pathway, as well as of the AKT1 signaling pathway. Phosphorylates PLCG1. Promotes phosphorylation of AKT1 and CBL. This Gallus gallus (Chicken) protein is Vascular endothelial growth factor receptor 1 (FLT1).